Consider the following 330-residue polypeptide: Phenylalanine--tRNA ligase alpha subunit (330 aa).

A Mg(2+)-binding site is contributed by Glu-246.

This sequence belongs to the class-II aminoacyl-tRNA synthetase family. Phe-tRNA synthetase alpha subunit type 1 subfamily. As to quaternary structure, tetramer of two alpha and two beta subunits. Mg(2+) serves as cofactor.

It localises to the cytoplasm. The catalysed reaction is tRNA(Phe) + L-phenylalanine + ATP = L-phenylalanyl-tRNA(Phe) + AMP + diphosphate + H(+). This is Phenylalanine--tRNA ligase alpha subunit from Sulfurimonas denitrificans (strain ATCC 33889 / DSM 1251) (Thiomicrospira denitrificans (strain ATCC 33889 / DSM 1251)).